The following is a 491-amino-acid chain: Aspartyl/glutamyl-tRNA(Asn/Gln) amidotransferase subunit B (491 aa).

This sequence belongs to the GatB/GatE family. GatB subfamily. In terms of assembly, heterotrimer of A, B and C subunits.

The catalysed reaction is L-glutamyl-tRNA(Gln) + L-glutamine + ATP + H2O = L-glutaminyl-tRNA(Gln) + L-glutamate + ADP + phosphate + H(+). It carries out the reaction L-aspartyl-tRNA(Asn) + L-glutamine + ATP + H2O = L-asparaginyl-tRNA(Asn) + L-glutamate + ADP + phosphate + 2 H(+). Functionally, allows the formation of correctly charged Asn-tRNA(Asn) or Gln-tRNA(Gln) through the transamidation of misacylated Asp-tRNA(Asn) or Glu-tRNA(Gln) in organisms which lack either or both of asparaginyl-tRNA or glutaminyl-tRNA synthetases. The reaction takes place in the presence of glutamine and ATP through an activated phospho-Asp-tRNA(Asn) or phospho-Glu-tRNA(Gln). This is Aspartyl/glutamyl-tRNA(Asn/Gln) amidotransferase subunit B from Prochlorococcus marinus (strain NATL1A).